The chain runs to 659 residues: PAN2-PAN3 deadenylation complex subunit PAN3 (659 aa).

Disordered stretches follow at residues 1–26 and 103–132; these read MASA…AREN and PKAA…QENI. The C3H1-type zinc-finger motif lies at 26–55; sequence NAKDTLCRNVTIYGRCRYEDKGCAFNHDPL. Polar residues predominate over residues 115 to 132; it reads SVASRSNTSTPNSRQENI. A pseudokinase domain region spans residues 262-522; the sequence is QTLPNTQLPA…NIDIFITGIS (261 aa). ATP contacts are provided by residues Arg-314, 363–370, and 422–423; these read DYYPLSKT and SK. Residues 523–561 are a coiled coil; it reads SQLMSTFDSALHLDDQLTSDLSRELENGRLVRLMTKLNL. A knob domain region spans residues 562 to 659; sequence VNERPEYEHD…ALLKPARRMH (98 aa).

This sequence belongs to the protein kinase superfamily. PAN3 family. In terms of assembly, homodimer. Forms a heterotrimer with a catalytic subunit pan2 to form the poly(A)-nuclease (PAN) deadenylation complex. Interacts (via PAM-2 motif) with poly(A)-binding protein pab1 (via PABC domain), conferring substrate specificity of the enzyme complex.

It localises to the cytoplasm. In terms of biological role, regulatory subunit of the poly(A)-nuclease (PAN) deadenylation complex, one of two cytoplasmic mRNA deadenylases involved in mRNA turnover. PAN specifically shortens poly(A) tails of RNA and the activity is stimulated by poly(A)-binding protein pab1. PAN deadenylation is followed by rapid degradation of the shortened mRNA tails by the CCR4-NOT complex. Deadenylated mRNAs are then degraded by two alternative mechanisms, namely exosome-mediated 3'-5' exonucleolytic degradation, or deadenylation-dependent mRNA decaping and subsequent 5'-3' exonucleolytic degradation by xrn1. May also be involved in post-transcriptional maturation of mRNA poly(A) tails. pan3 acts as a positive regulator for PAN activity, recruiting the catalytic subunit pan2 to mRNA via its interaction with RNA and with pab1. This Aspergillus clavatus (strain ATCC 1007 / CBS 513.65 / DSM 816 / NCTC 3887 / NRRL 1 / QM 1276 / 107) protein is PAN2-PAN3 deadenylation complex subunit PAN3.